A 117-amino-acid chain; its full sequence is Transcription elongation factor SPT4 (117 aa).

Residues 1 to 40 (MALETVPKDLRHLRACLLCSLVKTIDQFEYDGCDNCDAYL) form an interaction with SUPT5H region. Residues 16-36 (CLLCSLVKTIDQFEYDGCDNC) form a C4-type zinc finger.

The protein belongs to the SPT4 family. In terms of assembly, interacts with SUPT5H to form the DSIF complex. DSIF interacts with RNA polymerase II and with the positive transcription elongation factor b complex (P-TEFb complex), which is composed of CDK9 and cyclin-T.

The protein resides in the nucleus. Functionally, may function as a component of the DRB sensitivity-inducing factor complex (DSIF complex), which regulates transcription elongation by RNA polymerase II. Probably enhances transcriptional pausing at sites proximal to the promoter, which may in turn facilitate the assembly of an elongation competent RNA polymerase II complex. This is Transcription elongation factor SPT4 (supt4h1) from Xenopus laevis (African clawed frog).